Consider the following 363-residue polypeptide: UDP-3-O-acylglucosamine N-acyltransferase (363 aa).

Catalysis depends on H266, which acts as the Proton acceptor.

It belongs to the transferase hexapeptide repeat family. LpxD subfamily. As to quaternary structure, homotrimer.

It catalyses the reaction a UDP-3-O-[(3R)-3-hydroxyacyl]-alpha-D-glucosamine + a (3R)-hydroxyacyl-[ACP] = a UDP-2-N,3-O-bis[(3R)-3-hydroxyacyl]-alpha-D-glucosamine + holo-[ACP] + H(+). Its pathway is bacterial outer membrane biogenesis; LPS lipid A biosynthesis. In terms of biological role, catalyzes the N-acylation of UDP-3-O-acylglucosamine using 3-hydroxyacyl-ACP as the acyl donor. Is involved in the biosynthesis of lipid A, a phosphorylated glycolipid that anchors the lipopolysaccharide to the outer membrane of the cell. This chain is UDP-3-O-acylglucosamine N-acyltransferase, found in Bordetella bronchiseptica (strain ATCC BAA-588 / NCTC 13252 / RB50) (Alcaligenes bronchisepticus).